A 429-amino-acid polypeptide reads, in one-letter code: Adenylosuccinate synthetase (429 aa).

GTP-binding positions include 12–18 (GDEGKGK) and 40–42 (GHT). Residue D13 is the Proton acceptor of the active site. 2 residues coordinate Mg(2+): D13 and G40. Residues 13 to 16 (DEGK), 38 to 41 (NAGH), T128, R142, Q223, T238, and R302 each bind IMP. H41 functions as the Proton donor in the catalytic mechanism. Position 298–304 (298–304 (VNTGRPR)) interacts with substrate. GTP-binding positions include R304, 330 to 332 (KLD), and 412 to 414 (GVG).

Belongs to the adenylosuccinate synthetase family. As to quaternary structure, homodimer. The cofactor is Mg(2+).

Its subcellular location is the cytoplasm. It carries out the reaction IMP + L-aspartate + GTP = N(6)-(1,2-dicarboxyethyl)-AMP + GDP + phosphate + 2 H(+). It participates in purine metabolism; AMP biosynthesis via de novo pathway; AMP from IMP: step 1/2. Functionally, plays an important role in the de novo pathway of purine nucleotide biosynthesis. Catalyzes the first committed step in the biosynthesis of AMP from IMP. The sequence is that of Adenylosuccinate synthetase from Paenarthrobacter aurescens (strain TC1).